The chain runs to 173 residues: Mitochondrial holo-[acyl-carrier-protein] synthase (173 aa).

The protein belongs to the P-Pant transferase superfamily. AcpS family.

The protein localises to the mitochondrion. It carries out the reaction apo-[ACP] + CoA = holo-[ACP] + adenosine 3',5'-bisphosphate + H(+). Functionally, transfers the 4'-phosphopantetheine moiety from coenzyme A to a Ser of mitochondrial acyl-carrier-protein. The polypeptide is Mitochondrial holo-[acyl-carrier-protein] synthase (PPT2) (Saccharomyces cerevisiae (strain ATCC 204508 / S288c) (Baker's yeast)).